Here is a 449-residue protein sequence, read N- to C-terminus: Maltose-6'-phosphate glucosidase (449 aa).

NAD(+) is bound at residue 6–72 (FSIVIAGGGS…PDIEFAATTD (67 aa)). The substrate site is built by Arg-95 and Asn-149. Residue Cys-171 participates in Mn(2+) binding. Residue Asp-172 is the Proton donor of the active site. A Mn(2+)-binding site is contributed by His-202. Catalysis depends on Tyr-265, which acts as the Proton acceptor. Arg-285 contacts substrate.

This sequence belongs to the glycosyl hydrolase 4 family. In terms of assembly, homotetramer. Requires Mn(2+) as cofactor. Fe(2+) serves as cofactor. Co(2+) is required as a cofactor. It depends on Ni(2+) as a cofactor. The cofactor is NAD(+).

It carries out the reaction alpha-maltose 6'-phosphate + H2O = D-glucose 6-phosphate + D-glucose. Cellobiose-6'-phosphate and 6-phospho-beta-D-glucopyranoside are not substrates but competitive inhibitors of GlvA. Functionally, hydrolyzes maltose-6'-phosphate and trehalose-6'-phosphate. Is involved in the catabolism of alpha-glycosides accumulated via a phosphoenolpyruvate-dependent maltose phosphotransferase system (PEP-PTS). Is also able to significantly catalyze the hydrolysis of both 6-phospho-alpha- and 6-phospho-beta-glucosides containing activated leaving groups such as p-nitrophenol and does so with retention and inversion, respectively, of the substrate anomeric configuration. The chain is Maltose-6'-phosphate glucosidase (glvA) from Bacillus subtilis (strain 168).